A 382-amino-acid chain; its full sequence is MANQGQRVSWGDESTKTRGRSNSRGRKNNNIPLSFFNPITLQQGSKFWNLCPRDFVPKGIGNRDQQIGYWNRQTRYRMVKGQRKELPERWFFYYLGTGPHADAKFKDKLDGVVWVAKDGAMNKPTTLGSRGANNESKALKFDGKVPGEFQLEVNQSRDNSRSRSQSRSRSRNRSQSRGRQQFNNKKDDSVEQAVLAALKKLGVDTEKQQQRSRSKSKERSNSKTRDTTPKNENKHTWKRTAGKGDVTRFYGARSSSANFGDTDLVANGSSAKHYPQLAECVPSVSSILFGSYWTSKEDGDQIEVTFTHKYHLPKDDPKTGQFLQQINAYARPSEVAKEQRKRKSRSKSAERSEQDVVPDALIENYTDVFDDTQVEIIDEVTN.

Disordered stretches follow at residues 1-29 and 150-240; these read MANQGQRVSWGDESTKTRGRSNSRGRKNN and QLEV…WKRT. Residue Ser-9 is modified to Phosphoserine; by host. The segment covering 17–27 has biased composition (basic residues); that stretch reads TRGRSNSRGRK. Residues 31 to 153 enclose the CoV N NTD domain; that stretch reads IPLSFFNPIT…KVPGEFQLEV (123 aa). The interval 33–159 is RNA-binding; the sequence is LSFFNPITLQ…QLEVNQSRDN (127 aa). The segment covering 154–163 has biased composition (low complexity); it reads NQSRDNSRSR. A Phosphoserine; by host modification is found at Ser-156. The span at 164-176 shows a compositional bias: basic residues; that stretch reads SQSRSRSRNRSQS. The segment covering 201 to 235 has biased composition (basic and acidic residues); that stretch reads LGVDTEKQQQRSRSKSKERSNSKTRDTTPKNENKH. A CoV N CTD domain is found at 224-337; sequence TRDTTPKNEN…AYARPSEVAK (114 aa). The interval 231-334 is dimerization; the sequence is NENKHTWKRT…QINAYARPSE (104 aa). Phosphoserine; by host is present on residues Ser-254 and Ser-256. The segment at 328 to 358 is disordered; it reads AYARPSEVAKEQRKRKSRSKSAERSEQDVVP.

It belongs to the alphacoronavirus nucleocapsid protein family. As to quaternary structure, homooligomer. Both monomeric and oligomeric forms interact with RNA. Interacts with protein M. Interacts with NSP3; this interaction serves to tether the genome to the newly translated replicase-transcriptase complex at a very early stage of infection. In terms of processing, ADP-ribosylated. The ADP-ribosylation is retained in the virion during infection. Phosphorylated on serine and threonine residues.

Its subcellular location is the virion. The protein localises to the host endoplasmic reticulum-Golgi intermediate compartment. The protein resides in the host Golgi apparatus. Functionally, packages the positive strand viral genome RNA into a helical ribonucleocapsid (RNP) and plays a fundamental role during virion assembly through its interactions with the viral genome and membrane protein M. Plays an important role in enhancing the efficiency of subgenomic viral RNA transcription as well as viral replication. The chain is Nucleoprotein from Sus scrofa (Pig).